The primary structure comprises 372 residues: MYNNKTMGSNKTIIINLNNLEHNLNLIKNKIGEKEIVATLKGDAYGHGLINIFKFLKSKNINYFGLSNIEDAKTLKKIDKNIKILMYIKVDKKEIKNLIKFELVPFVSDFEYLFLIEKECALQKNKIKVHLKIDIGMNRYGIKIDDALEIATYIQNSKFLELEGICSHLPSIENFKTTQKQIEQFLFFLETLKQKNIHPKFVHISNSGHIINYKLNPQFNMVRPGLILYGYCQSLKNKKPALNFKPVLSLFSKVIFIKNVKKGEKISYSGIFQAKEDMKIGIIPIGYFDGIPQNISNDFYFLINNKKCKIRGKVCMNLTIVEIPKDLKVKTGSKVEIVSEKLSIDEMSKFSKRSHYELLCNIGKYEKRKYLD.

Catalysis depends on Lys41, which acts as the Proton acceptor; specific for D-alanine. Lys41 carries the post-translational modification N6-(pyridoxal phosphate)lysine. Position 139 (Arg139) interacts with substrate. Tyr268 functions as the Proton acceptor; specific for L-alanine in the catalytic mechanism. Met316 provides a ligand contact to substrate.

This sequence belongs to the alanine racemase family. The cofactor is pyridoxal 5'-phosphate.

It carries out the reaction L-alanine = D-alanine. It functions in the pathway amino-acid biosynthesis; D-alanine biosynthesis; D-alanine from L-alanine: step 1/1. Catalyzes the interconversion of L-alanine and D-alanine. May also act on other amino acids. The protein is Alanine racemase (alr) of Borreliella burgdorferi (strain ATCC 35210 / DSM 4680 / CIP 102532 / B31) (Borrelia burgdorferi).